The primary structure comprises 327 residues: 4-hydroxyproline 2-epimerase (327 aa).

The active-site Proton acceptor is Cys85. Residues 86–87, His205, and Asp231 contribute to the substrate site; that span reads GH. The active-site Proton donor is Cys235. 236–237 provides a ligand contact to substrate; sequence GT.

Belongs to the proline racemase family.

It catalyses the reaction trans-4-hydroxy-L-proline = cis-4-hydroxy-D-proline. Catalyzes the epimerization of trans-4-hydroxy-L-proline (t4LHyp) to cis-4-hydroxy-D-proline (c4DHyp). Displays no proline racemase activity. This chain is 4-hydroxyproline 2-epimerase, found in Roseibium alexandrii (strain DSM 17067 / NCIMB 14079 / DFL-11) (Labrenzia alexandrii).